Reading from the N-terminus, the 159-residue chain is Phosphopantetheine adenylyltransferase (159 aa).

Residue Thr-10 participates in substrate binding. ATP is bound by residues 10 to 11 (TF) and His-18. Residues Lys-42, Leu-74, and Arg-88 each coordinate substrate. Residues 89–91 (GLR), Glu-99, and 124–130 (YSFISSS) contribute to the ATP site.

This sequence belongs to the bacterial CoaD family. As to quaternary structure, homohexamer. It depends on Mg(2+) as a cofactor.

It localises to the cytoplasm. It catalyses the reaction (R)-4'-phosphopantetheine + ATP + H(+) = 3'-dephospho-CoA + diphosphate. It participates in cofactor biosynthesis; coenzyme A biosynthesis; CoA from (R)-pantothenate: step 4/5. Reversibly transfers an adenylyl group from ATP to 4'-phosphopantetheine, yielding dephospho-CoA (dPCoA) and pyrophosphate. The polypeptide is Phosphopantetheine adenylyltransferase (Campylobacter hominis (strain ATCC BAA-381 / DSM 21671 / CCUG 45161 / LMG 19568 / NCTC 13146 / CH001A)).